The chain runs to 489 residues: Aklavinone 12-hydroxylase DnrF (489 aa).

FAD is bound by residues 17–18 (LG), E37, Q121, and L145. The active-site Proton acceptor is Y224. D308 provides a ligand contact to FAD. Position 317 (G317) interacts with aklavinone. Disordered stretches follow at residues 402–428 (VAAE…RAPH) and 455–489 (EGGA…PPAN). Low complexity predominate over residues 468–482 (RIWASASTSISSAAM).

It belongs to the PheA/TfdB FAD monooxygenase family. In terms of assembly, monomer. Requires FAD as cofactor.

The catalysed reaction is aklavinone + NADPH + O2 + H(+) = epsilon-rhodomycinone + NADP(+) + H2O. The protein operates within antibiotic biosynthesis; daunorubicin biosynthesis. Its pathway is antibiotic biosynthesis; carminomycin biosynthesis. It functions in the pathway antibiotic biosynthesis; rhodomycin biosynthesis. Its function is as follows. Involved in the biosynthesis of the anthracyclines carminomycin, rhodomycin and daunorubicin (daunomycin) which are aromatic polyketide antibiotics that exhibit high cytotoxicity and are widely applied in the chemotherapy of a variety of cancers. Catalyzes the incorporation of a hydroxyl group at position C-11 of aklavinone, resulting in epsilon-rhodomycinone. It cannot accept substrates glycosylated at position C-7. It can also hydroxylate 11-deoxycarminomycinone and can use both NAD or NADP. The protein is Aklavinone 12-hydroxylase DnrF (dnrF) of Streptomyces peucetius.